We begin with the raw amino-acid sequence, 562 residues long: Glycine betaine/proline/choline/ectoine transporter VP1456 (562 aa).

12 helical membrane-spanning segments follow: residues Pro-68–Glu-88, Phe-110–Leu-130, Val-147–Val-167, Trp-203–Phe-223, Ala-243–Leu-263, Gly-287–Val-307, Met-322–Gly-342, Trp-373–Ala-393, Phe-404–Gly-424, Val-456–Ile-476, Ile-503–Glu-523, and Gly-531–Val-551.

This sequence belongs to the BCCT transporter (TC 2.A.15) family.

The protein localises to the cell inner membrane. Its function is as follows. Involved in the uptake of osmoprotectants. Can transport glycine betaine, proline, choline and ectoine. The polypeptide is Glycine betaine/proline/choline/ectoine transporter VP1456 (Vibrio parahaemolyticus serotype O3:K6 (strain RIMD 2210633)).